Reading from the N-terminus, the 485-residue chain is Myocardial zonula adherens protein (485 aa).

The span at 1–18 (MMRYGSAATVTTSETASS) shows a compositional bias: low complexity. Disordered stretches follow at residues 1–21 (MMRY…SQKP) and 40–65 (KQEE…KKRN).

Belongs to the MYZAP family.

The protein is Myocardial zonula adherens protein (myzap) of Xenopus tropicalis (Western clawed frog).